The following is a 273-amino-acid chain: METNVPKRKEPAKSLRIKVISMGNAEVGKSCIIKRYCEKRFVSKYLATIGIDYGVTKVQVRDREIKVNIFDMAGHPFFFEVRNEFYKDTQGVILVYDVGQKDSFDALDSWLAEMKQELGPHGNMDNIVFVVCANKIDCSKHRCIDESEGRLWAESKGFLYFETSAQTGEGINEMFQTFYLSIVDLCENGGKRPTASSSASFTKEQADTIRRIRNSKDSWEMLGVRPGASREEVNKAYRKLAVLLHPDKCVAPGSEDAFKAVVNARTALLKNIK.

A required for interaction with MAPK1 region spans residues 1-18 (METNVPKRKEPAKSLRIK). GTP is bound by residues 23-30 (GNAEVGKS), 71-75 (DMAGH), and 134-137 (NKID). The J domain occupies 217-273 (DSWEMLGVRPGASREEVNKAYRKLAVLLHPDKCVAPGSEDAFKAVVNARTALLKNIK).

This sequence belongs to the small GTPase superfamily. Rab family. As to quaternary structure, interacts directly with MAPK1 (wild-type and kinase-deficient forms). Interacts directly (in GTP-bound form) with MAP2K1 (wild-type and kinase-deficient forms).

Its subcellular location is the nucleus. GTPase which can activate the MEK/ERK pathway and induce cell transformation when overexpressed. May act as a nuclear scaffold for MAPK1, probably by association with MAPK1 nuclear export signal leading to enhanced ERK1/ERK2 signaling. The sequence is that of DnaJ homolog subfamily C member 27 (Dnajc27) from Mus musculus (Mouse).